A 377-amino-acid polypeptide reads, in one-letter code: Carbonic anhydrase 1 (377 aa).

Residues 1 to 20 form the signal peptide; it reads MARTGALLLVALALAGCAQA. The Alpha-carbonic anhydrase domain occupies 38–318; it reads DHWDHGLNGE…HHHRRLLHNH (281 aa). Disulfide bonds link Cys-61/Cys-264, Cys-194/Cys-198, and Cys-296/Cys-351. Asn-101 carries an N-linked (GlcNAc...) asparagine glycan. The Proton acceptor role is filled by His-112. N-linked (GlcNAc...) asparagine glycosylation is present at Asn-135. Zn(2+)-binding residues include His-163, His-165, and His-182. Substrate contacts are provided by residues Thr-260 and 260–261; that span reads TT. An N-linked (GlcNAc...) asparagine glycan is attached at Asn-297.

This sequence belongs to the alpha-carbonic anhydrase family. In terms of assembly, tetramer of two large and two small subunits linked by two disulfide bonds. Zn(2+) serves as cofactor.

The protein resides in the periplasm. The catalysed reaction is hydrogencarbonate + H(+) = CO2 + H2O. Reversible hydration of carbon dioxide. This is Carbonic anhydrase 1 (CAH1) from Chlamydomonas reinhardtii (Chlamydomonas smithii).